Here is a 926-residue protein sequence, read N- to C-terminus: Serine/threonine-protein kinase pakE (926 aa).

Polar residues predominate over residues 36–55 (SSRELPTQDSSTKTSNITTP). Disordered stretches follow at residues 36–257 (SSRE…RPKL) and 546–576 (QLNN…TTTT). Over residues 56–107 (NNNNNNNNNNNNNNNNNNNNNNNNNNNNNNNNNNNNNNNNNNNNNNNNNNNN) the composition is skewed to low complexity. The span at 108-117 (TPTSLNSSWK) shows a compositional bias: polar residues. Positions 134-173 (NNNNNVGSPNNQSTSQTNHQQPPPQQLQQQQSLSSTSTPS) are enriched in low complexity. Residues 183–204 (RRNVTSPNLTRSDPTVPITNSR) are compositionally biased toward polar residues. The span at 215-253 (PQFQLNNLNFDDNNDHSTTTTNNNNNNNNNNSNNNNNNN) shows a compositional bias: low complexity. Residues 534–567 (LDFEKELKENQQQLNNNNNNNNNNNNNNNNNNNN) are a coiled coil. Residues 650–903 (FEFKEKLGQG…VIDLLSHDFI (254 aa)) form the Protein kinase domain. ATP is bound by residues 656 to 664 (LGQGGYGAV) and lysine 679. Aspartate 771 serves as the catalytic Proton acceptor.

Belongs to the protein kinase superfamily. STE Ser/Thr protein kinase family. STE20 subfamily. Mg(2+) is required as a cofactor.

It catalyses the reaction L-seryl-[protein] + ATP = O-phospho-L-seryl-[protein] + ADP + H(+). The enzyme catalyses L-threonyl-[protein] + ATP = O-phospho-L-threonyl-[protein] + ADP + H(+). Functionally, may play a role in responding to changes in chemoattractant levels. The polypeptide is Serine/threonine-protein kinase pakE (Dictyostelium discoideum (Social amoeba)).